Reading from the N-terminus, the 707-residue chain is DCC-interacting protein 13-alpha (707 aa).

The interval 1 to 428 (MPGIDKLPIE…PPTARTSSSG (428 aa)) is required for RAB5A binding. Positions 3–268 (GIDKLPIEET…DPLYLPDPDP (266 aa)) constitute a BAR domain. Residues 234 to 257 (QNVRREMDGDVETMQQTIEDLEVA) adopt a coiled-coil conformation. The PH domain occupies 277 to 375 (LTRKAGYLNA…WICTINNISK (99 aa)). 3 disordered regions span residues 397–433 (AVTP…LGSE), 466–490 (GQAK…STKS), and 636–707 (EKQK…ESEA). The residue at position 399 (Thr-399) is a Phosphothreonine. Ser-401 is modified (phosphoserine). The short motif at 403–414 (SFQQRHESLRPG) is the F&amp;H element. A Phosphoserine; by PKA modification is found at Ser-410. A PID domain is found at 495-655 (SILHQLFIVR…EKQQKELSKQ (161 aa)). The stretch at 620 to 670 (LAKQIALHAELDRRASEKQKEIERVKEKQQKELSKQKQIEKDLEEQSRLIA) forms a coiled coil. The segment covering 636–666 (EKQKEIERVKEKQQKELSKQKQIEKDLEEQS) has biased composition (basic and acidic residues). Low complexity predominate over residues 679 to 691 (GSEGQLVLSSSQS). Residues Ser-691 and Ser-694 each carry the phosphoserine modification. Residues 698–707 (EEGKKRESEA) are compositionally biased toward basic and acidic residues.

As to quaternary structure, homodimer. Binds RAB5A/Rab5 through an N-terminal domain. This interaction is essential for its recruitment to endosomal membranes as well as its role in cell proliferation. Binds DCC and the catalytic domain of the inactive form of AKT2 through its PID domain. Binds PIK3CA and subunits of the NuRD/MeCP1 complex. Interacts with OCRL and INPP5B. Interacts with NTRK2. Interacts with APPL2; interaction is independent of follicle stimulating hormone stimulation; interaction is decreased by adiponectin in a time-dependent manner. Forms a complex with APPL2 and RUVBL2. Forms a complex comprising APPL2, RUVBL2, CTNNB1, HDAC1 and HDAC2; interaction reduces interaction between CTNNB1, HDAC1, HDAC2 and RUVBL2 leading to the decrease of deacetylase activity of this complex; affects the recruitment of repressive complexes to the Wnt target genes. Interacts with ANXA2. Interacts with TGFBR1; interaction is TGF beta dependent; mediates trafficking of the TGFBR1 from the endosomes to the nucleus via microtubules in a TRAF6-dependent manner. Interacts with PRKCZ. Interacts with PIK3R1 and APPL2. Interacts with ADIPOR1; ADIPOQ enhances this interaction; inhibites adiponectin-stimulated binding of APPL2 to ADIPOR1. Phosphorylation at Ser-410 by PKA severely impairs binding to OCRL. As to expression, expressed in insulin-target tissues including skeletal muscle, liver, fat, and brain.

The protein resides in the early endosome membrane. It localises to the nucleus. Its subcellular location is the cytoplasm. It is found in the endosome. The protein localises to the cell projection. The protein resides in the ruffle. It localises to the cytoplasmic vesicle. Its subcellular location is the phagosome. Functionally, multifunctional adapter protein that binds to various membrane receptors, nuclear factors and signaling proteins to regulate many processes, such as cell proliferation, immune response, endosomal trafficking and cell metabolism. Regulates signaling pathway leading to cell proliferation through interaction with RAB5A and subunits of the NuRD/MeCP1 complex. Functions as a positive regulator of innate immune response via activation of AKT1 signaling pathway by forming a complex with APPL1 and PIK3R1. Inhibits Fc-gamma receptor-mediated phagocytosis through PI3K/Akt signaling in macrophages. Regulates TLR4 signaling in activated macrophages. Involved in trafficking of the TGFBR1 from the endosomes to the nucleus via microtubules in a TRAF6-dependent manner. Plays a role in cell metabolism by regulating adiponecting and insulin signaling pathways. Required for fibroblast migration through HGF cell signaling. Positive regulator of beta-catenin/TCF-dependent transcription through direct interaction with RUVBL2/reptin resulting in the relief of RUVBL2-mediated repression of beta-catenin/TCF target genes by modulating the interactions within the beta-catenin-reptin-HDAC complex. This is DCC-interacting protein 13-alpha from Mus musculus (Mouse).